The sequence spans 184 residues: Inosine triphosphate pyrophosphatase (184 aa).

10 to 15 provides a ligand contact to ITP; it reads TGNVKK. Glutamate 37 lines the Mg(2+) pocket. Residues lysine 49, 65-66, lysine 82, 141-144, lysine 164, and 169-170 contribute to the ITP site; these read DT, FGWD, and HR.

The protein belongs to the HAM1 NTPase family. As to quaternary structure, homodimer. Mg(2+) serves as cofactor. Mn(2+) is required as a cofactor.

The protein localises to the cytoplasm. It carries out the reaction ITP + H2O = IMP + diphosphate + H(+). The catalysed reaction is dITP + H2O = dIMP + diphosphate + H(+). It catalyses the reaction XTP + H2O = XMP + diphosphate + H(+). Its function is as follows. Pyrophosphatase that hydrolyzes non-canonical purine nucleotides such as inosine triphosphate (ITP), deoxyinosine triphosphate (dITP) or xanthosine 5'-triphosphate (XTP) to their respective monophosphate derivatives. The enzyme does not distinguish between the deoxy- and ribose forms. Probably excludes non-canonical purines from RNA and DNA precursor pools, thus preventing their incorporation into RNA and DNA and avoiding chromosomal lesions. In Caenorhabditis elegans, this protein is Inosine triphosphate pyrophosphatase.